The primary structure comprises 311 residues: Homoserine kinase (311 aa).

88–98 provides a ligand contact to ATP; the sequence is PEGLGLGSSGA.

The protein belongs to the GHMP kinase family. Homoserine kinase subfamily.

It localises to the cytoplasm. It catalyses the reaction L-homoserine + ATP = O-phospho-L-homoserine + ADP + H(+). It participates in amino-acid biosynthesis; L-threonine biosynthesis; L-threonine from L-aspartate: step 4/5. Functionally, catalyzes the ATP-dependent phosphorylation of L-homoserine to L-homoserine phosphate. In Saccharolobus solfataricus (strain ATCC 35092 / DSM 1617 / JCM 11322 / P2) (Sulfolobus solfataricus), this protein is Homoserine kinase.